The sequence spans 356 residues: MAANVLIMAGGTGGHVFPALACAREFQTRGYAVHWLGTPRGIENELVPAAGLPLHLIQVSGLRGKGLASLIKAPLQLVRSLFQARRIIRELRPVCVLGLGGYVTGPGGLAAKLAGVPLVIHEQNAVAGTANRSLVPLASRVCEAFPDTFSSSAKRRTTGNPVREELFLETPRDSLAHRRPRLLVLGGSLGAEPLNKLLPAALAQVPAELRPEVFHQAGKQHAEITEQRYAEAGVEAEVAPFIKDMARAYAWADLVICRAGALTVCELAAAGLPSFLVPLPHAIDDHQTRNAEYLANEGAAVLLPQAKTDAAALAAQLTEVMMQPEKLKAMGTTARRLARPDATRSVVDICLEVAHG.

UDP-N-acetyl-alpha-D-glucosamine is bound by residues 12 to 14, asparagine 124, arginine 163, serine 188, isoleucine 242, 261 to 266, and glutamine 287; these read TGG and ALTVCE.

The protein belongs to the glycosyltransferase 28 family. MurG subfamily.

The protein resides in the cell inner membrane. The catalysed reaction is di-trans,octa-cis-undecaprenyl diphospho-N-acetyl-alpha-D-muramoyl-L-alanyl-D-glutamyl-meso-2,6-diaminopimeloyl-D-alanyl-D-alanine + UDP-N-acetyl-alpha-D-glucosamine = di-trans,octa-cis-undecaprenyl diphospho-[N-acetyl-alpha-D-glucosaminyl-(1-&gt;4)]-N-acetyl-alpha-D-muramoyl-L-alanyl-D-glutamyl-meso-2,6-diaminopimeloyl-D-alanyl-D-alanine + UDP + H(+). Its pathway is cell wall biogenesis; peptidoglycan biosynthesis. Functionally, cell wall formation. Catalyzes the transfer of a GlcNAc subunit on undecaprenyl-pyrophosphoryl-MurNAc-pentapeptide (lipid intermediate I) to form undecaprenyl-pyrophosphoryl-MurNAc-(pentapeptide)GlcNAc (lipid intermediate II). In Stutzerimonas stutzeri (strain A1501) (Pseudomonas stutzeri), this protein is UDP-N-acetylglucosamine--N-acetylmuramyl-(pentapeptide) pyrophosphoryl-undecaprenol N-acetylglucosamine transferase.